The following is a 205-amino-acid chain: GTP-binding protein yptV5 (205 aa).

15 to 22 (GDSGVGKT) contributes to the GTP binding site. Positions 37 to 45 (YKATIGADF) match the Effector region motif. GTP contacts are provided by residues 63–67 (DTAGQ) and 125–128 (NKID). Residues Cys-204 and Cys-205 are each lipidated (S-geranylgeranyl cysteine).

Belongs to the small GTPase superfamily. Rab family.

It localises to the cell membrane. Functionally, protein transport. Probably involved in vesicular traffic. The chain is GTP-binding protein yptV5 (YPTV5) from Volvox carteri (Green alga).